Consider the following 457-residue polypeptide: Argininosuccinate lyase (457 aa).

It belongs to the lyase 1 family. Argininosuccinate lyase subfamily.

It localises to the cytoplasm. It catalyses the reaction 2-(N(omega)-L-arginino)succinate = fumarate + L-arginine. It participates in amino-acid biosynthesis; L-arginine biosynthesis; L-arginine from L-ornithine and carbamoyl phosphate: step 3/3. The chain is Argininosuccinate lyase from Escherichia coli O7:K1 (strain IAI39 / ExPEC).